A 482-amino-acid chain; its full sequence is MSSRCKRCLNSFSEMNLKLKIAIIVIGFIHVSIAIARKSTDGVAHHRLVRLHTILITSTAMLSASYYIWKRVNFAITKLFKTLKSENELPIANSNESESDFAMNTLLPSPNPVGNRRLRLICFQDIAQALMMLFLFLSHIAMFFYYIFLGPEPNVIAITSLSFIAAYAHILIFLLIADVLFYSTKLIHSKVAPNSVHTYLKENRCYHILLALILGFIFMFAGLYTTHTDPIVRSASIPMKRFQSNSGNVSIALLSDVHIGPSVGRTRIAKIVELTNALKPDIIAIAGDLADGLVRDFHGAAEPLCNLKAPGGVYFATGNHEYMHGNVTEWFWFLENCNITVLHNLNKHITVNGQKLCVAGADDLYALRSNVPGHGMDLRKALGTCNSDSTNILLAHQPNAAKIVLSDSELSKKVNLILSGHTHGGQMYPFVPIVHLANAFVRGQYYDKSTDTYVYVSAGVNYFGPPIKMFGSCEIIFITMTQ.

4 helical membrane-spanning segments follow: residues 15–35 (MNLKLKIAIIVIGFIHVSIAI), 129–149 (ALMMLFLFLSHIAMFFYYIFL), 156–176 (IAITSLSFIAAYAHILIFLLI), and 205–225 (CYHILLALILGFIFMFAGLYT). Asp256, His258, Asp288, Asn319, His421, and His423 together coordinate a divalent metal cation.

The protein belongs to the metallophosphoesterase superfamily. LOC643853 family.

It is found in the membrane. This Caenorhabditis elegans protein is Putative metallophosphoesterase F40B5.2.